The chain runs to 188 residues: GMP synthase [glutamine-hydrolyzing] subunit A (188 aa).

In terms of domain architecture, Glutamine amidotransferase type-1 spans 2–188; sequence KVGLVYYGGQ…FKNFLGVCRK (187 aa). Residue cysteine 79 is the Nucleophile of the active site. Residues histidine 166 and glutamate 168 contribute to the active site.

In terms of assembly, heterodimer composed of a glutamine amidotransferase subunit (A) and a GMP-binding subunit (B).

The enzyme catalyses XMP + L-glutamine + ATP + H2O = GMP + L-glutamate + AMP + diphosphate + 2 H(+). Its pathway is purine metabolism; GMP biosynthesis; GMP from XMP (L-Gln route): step 1/1. Functionally, catalyzes the synthesis of GMP from XMP. This Saccharolobus solfataricus (strain ATCC 35092 / DSM 1617 / JCM 11322 / P2) (Sulfolobus solfataricus) protein is GMP synthase [glutamine-hydrolyzing] subunit A.